The following is a 98-amino-acid chain: NADH-ubiquinone oxidoreductase chain 4L (98 aa).

3 helical membrane passes run 1–21 (MSLTYMNMFMAFTISLLGLLM), 29–49 (SLLCLEGMMLSLFVMMTMTIL), and 61–81 (IILLVFAACEAALGLSLLVMV).

Belongs to the complex I subunit 4L family. In terms of assembly, core subunit of respiratory chain NADH dehydrogenase (Complex I) which is composed of 45 different subunits.

Its subcellular location is the mitochondrion inner membrane. It carries out the reaction a ubiquinone + NADH + 5 H(+)(in) = a ubiquinol + NAD(+) + 4 H(+)(out). Functionally, core subunit of the mitochondrial membrane respiratory chain NADH dehydrogenase (Complex I) which catalyzes electron transfer from NADH through the respiratory chain, using ubiquinone as an electron acceptor. Part of the enzyme membrane arm which is embedded in the lipid bilayer and involved in proton translocation. This Stenoderma rufum (Red fruit bat) protein is NADH-ubiquinone oxidoreductase chain 4L (MT-ND4L).